The chain runs to 213 residues: Pyrrolidone-carboxylate peptidase (213 aa).

Active-site residues include E78, C141, and H165.

This sequence belongs to the peptidase C15 family. Homotetramer.

The protein localises to the cytoplasm. It carries out the reaction Release of an N-terminal pyroglutamyl group from a polypeptide, the second amino acid generally not being Pro.. Its function is as follows. Removes 5-oxoproline from various penultimate amino acid residues except L-proline. This Clostridium botulinum (strain Alaska E43 / Type E3) protein is Pyrrolidone-carboxylate peptidase.